The chain runs to 517 residues: Retinal dehydrogenase 2 (517 aa).

NAD(+) contacts are provided by residues 184 to 186, 210 to 213, and 264 to 266; these read IPW, KPAE, and STE. Glu286 acts as the Proton acceptor in catalysis. The active-site Nucleophile is the Cys320. NAD(+) is bound by residues 366 to 370 and Glu417; that span reads KQYNK.

This sequence belongs to the aldehyde dehydrogenase family. As to quaternary structure, homotetramer. In terms of tissue distribution, expressed in the high vocal center (HVC) which integrates auditory and motor activities and constitutes a nodal nucleus on the song system.

The protein resides in the cytoplasm. It carries out the reaction retinal + NAD(+) + H2O = retinoate + NADH + 2 H(+). It catalyses the reaction all-trans-retinal + NAD(+) + H2O = all-trans-retinoate + NADH + 2 H(+). The catalysed reaction is all-trans-13,14-dihydroretinal + NAD(+) + H2O = all-trans-13,14-dihydroretinoate + NADH + 2 H(+). The protein operates within cofactor metabolism; retinol metabolism. Its function is as follows. Catalyzes the NAD-dependent oxidation of aldehyde substrates, such as all-trans-retinal and all-trans-13,14-dihydroretinal, to their corresponding carboxylic acids, all-trans-retinoate and all-trans-13,14-dihydroretinoate, respectively. Retinoate signaling is critical for the transcriptional control of many genes, for instance it is crucial for initiation of meiosis in both male and female. Recognizes retinal as substrate, both in its free form and when bound to cellular retinol-binding protein. Lacks activity with benzaldehyde, acetaldehyde and octanal. Displays complete lack of activity with citral. Plays a significant role in the acquisition and production of learned songs. This chain is Retinal dehydrogenase 2 (ALDH1A2), found in Taeniopygia guttata (Zebra finch).